A 677-amino-acid polypeptide reads, in one-letter code: Threonine--tRNA ligase (677 aa).

A TGS domain is found at Met1–Ala59. Positions Asp255–Pro561 are catalytic. The Zn(2+) site is built by Cys360, His411, and His538.

Belongs to the class-II aminoacyl-tRNA synthetase family. Homodimer. Zn(2+) is required as a cofactor.

The protein localises to the cytoplasm. It carries out the reaction tRNA(Thr) + L-threonine + ATP = L-threonyl-tRNA(Thr) + AMP + diphosphate + H(+). In terms of biological role, catalyzes the attachment of threonine to tRNA(Thr) in a two-step reaction: L-threonine is first activated by ATP to form Thr-AMP and then transferred to the acceptor end of tRNA(Thr). Also edits incorrectly charged L-seryl-tRNA(Thr). The protein is Threonine--tRNA ligase of Bifidobacterium longum (strain NCC 2705).